A 511-amino-acid polypeptide reads, in one-letter code: Maturase K (511 aa).

This sequence belongs to the intron maturase 2 family. MatK subfamily.

It is found in the plastid. Usually encoded in the trnK tRNA gene intron. Probably assists in splicing its own and other chloroplast group II introns. The polypeptide is Maturase K (Lathraea clandestina (Purple toothwort)).